We begin with the raw amino-acid sequence, 409 residues long: MEGPASSKPLKDKTNPWGPLIILGILIRAGVSVQLDSPHQVSNVTWRVTNLMTGQTANATSLLGTMTEAFPKLYFDLCDLMGDDWDETGLGCRTPGGRKRARTFDFYVCPGHTVPTGCGGPREGYCGKWGCETTGQAYWKPSSSWDLISLKRGNTPKDQGPCYDSSVSSGVLGATPGGRCNPLVLEFTDAGRKASWDAPKVWGLRLYRSTGTDPVTRFSLTRQVLDIGPRVPIGSNPVTTDQLPLSRPVQTMPPRPLQPPPPGAASIVPETAPPPQQPGAGDRLLNLVDGAYQALNLTNPDKIQECWLCLVSGPPYYEGVVVLGTYFNHTIALKEKCCFYADHTGLVRDSMAKLRKRLTQRQKLFESSRGWFEGSSNRSPWFTTLISAIMGSLIILLLLLILLIWTLYS.

An N-terminal signal peptide occupies residues 1–32 (MEGPASSKPLKDKTNPWGPLIILGILIRAGVS). Residues 33–384 (VQLDSPHQVS…SSNRSPWFTT (352 aa)) lie on the Virion surface side of the membrane. 2 N-linked (GlcNAc...) asparagine; by host glycosylation sites follow: N43 and N58. Positions 232 to 280 (PIGSNPVTTDQLPLSRPVQTMPPRPLQPPPPGAASIVPETAPPPQQPGA) are disordered. The span at 251–263 (TMPPRPLQPPPPG) shows a compositional bias: pro residues. N-linked (GlcNAc...) asparagine; by host glycosylation is found at N296 and N328. A helical membrane pass occupies residues 385-405 (LISAIMGSLIILLLLLILLIW). Residues 406-409 (TLYS) lie on the Intravirion side of the membrane.

In terms of assembly, homooligomer. Forms heterooligomers with mouse EPOR, probably via their respective transmembrane domains. Forms covalent heterodimers with mouse MST1R isoform sf-Stk, probably via disulfide bonds.

It localises to the host endoplasmic reticulum membrane. The protein localises to the host cell membrane. It is found in the virion membrane. Its function is as follows. This envelope-like membrane glycoprotein is responsible for ligand-independent activation of the erythropoietin receptor EPOR leading to the abnormally rapid proliferation of erythroid precursor cells. In the first stage of Friend disease, constitutive activation of EPOR by gp55 causes uncontrolled, polyclonal proliferation of infected erythroblasts, leading to polycythemia (massive increase in the number of mature red cells). Host susceptibility to SSFV-induced erythroblastosis depends on the expression of the truncated isoform of MST1R receptor tyrosine kinase (MST1R isoform sf-Stk). Interaction with SSFV gp 55 results in constitutive tyrosine phosphorylation and activation of MST1R isoform sf-Stk. The protein is Glycoprotein 55 (env) of Mus musculus (Mouse).